The chain runs to 172 residues: Translation initiation factor IF-3 (172 aa).

This sequence belongs to the IF-3 family. As to quaternary structure, monomer.

The protein resides in the cytoplasm. In terms of biological role, IF-3 binds to the 30S ribosomal subunit and shifts the equilibrium between 70S ribosomes and their 50S and 30S subunits in favor of the free subunits, thus enhancing the availability of 30S subunits on which protein synthesis initiation begins. The sequence is that of Translation initiation factor IF-3 from Bartonella henselae (strain ATCC 49882 / DSM 28221 / CCUG 30454 / Houston 1) (Rochalimaea henselae).